Reading from the N-terminus, the 253-residue chain is Ribosomal RNA small subunit methyltransferase J (253 aa).

S-adenosyl-L-methionine contacts are provided by residues 123–124 and aspartate 176; that span reads ER.

It belongs to the methyltransferase superfamily. RsmJ family.

The protein resides in the cytoplasm. It catalyses the reaction guanosine(1516) in 16S rRNA + S-adenosyl-L-methionine = N(2)-methylguanosine(1516) in 16S rRNA + S-adenosyl-L-homocysteine + H(+). Its function is as follows. Specifically methylates the guanosine in position 1516 of 16S rRNA. In Magnetococcus marinus (strain ATCC BAA-1437 / JCM 17883 / MC-1), this protein is Ribosomal RNA small subunit methyltransferase J.